The chain runs to 2074 residues: Cell adhesion molecule Dscam2 (2074 aa).

The first 21 residues, 1-21, serve as a signal peptide directing secretion; it reads MWISSRFFVILLLLNLDNTCS. At 22–1619 the chain is on the extracellular side; it reads EPFEAHLRGP…QTTVIFANIN (1598 aa). Ig-like C2-type domains follow at residues 31 to 120, 238 to 326, 330 to 417, 422 to 516, 521 to 607, 612 to 698, 707 to 802, and 805 to 902; these read PGFV…RIVS, PSVV…LRLT, PIQV…AELQ, PPVL…ARLN, PYIR…GEVT, PSIE…IKYT, PRWI…LKVN, and PYFS…LQVQ. 8 disulfides stabilise this stretch: Cys53/Cys109, Cys259/Cys310, Cys352/Cys400, Cys444/Cys500, Cys541/Cys590, Cys633/Cys686, Cys728/Cys783, and Cys826/Cys884. Fibronectin type-III domains lie at 907-1003, 1008-1108, 1113-1211, and 1215-1311; these read PPSV…TEPQ, PPLS…TMED, PPED…SEED, and APAD…TNRI. The 89-residue stretch at 1312–1400 folds into the Ig-like C2-type 9 domain; that stretch reads PARIISFGGP…DRLTHTLIVQ (89 aa). Cys1334 and Cys1382 are joined by a disulfide. 2 consecutive Fibronectin type-III domains span residues 1402 to 1495 and 1496 to 1595; these read PPTA…TQGQ and SPGH…TKDG. A helical membrane pass occupies residues 1620–1640; the sequence is LLIPTIAAVSGMFCTIIMIIV. Residues 1641–2074 are Cytoplasmic-facing; that stretch reads CYRHMLKNAP…KFFTAPTLPK (434 aa). Disordered stretches follow at residues 1739–1766, 1778–1917, 1936–1974, and 2011–2074; these read EGCS…HQRP, PFHN…KSIS, SPSI…SLKQ, and PSSQ…TLPK. Basic residues predominate over residues 1757–1766; sequence THHHHHHQRP. Residues 1831-1846 show a composition bias toward polar residues; the sequence is AQSSTSSDLSPMSEQK. Basic residues predominate over residues 1848–1858; the sequence is LPRRGRSRYHH. Residues 1859–1868 show a composition bias toward polar residues; it reads QQYQFSTNTT. 3 stretches are compositionally biased toward low complexity: residues 1875 to 1903, 1942 to 1974, and 2036 to 2051; these read NKMN…SNSN, QQQK…SLKQ, and SQQS…QQHP. Positions 2055–2066 are enriched in polar residues; that stretch reads LNPSTAMLSSKF.

Its subcellular location is the membrane. Functionally, cell adhesion molecule. The protein is Cell adhesion molecule Dscam2 (Dscam2) of Drosophila melanogaster (Fruit fly).